A 125-amino-acid polypeptide reads, in one-letter code: uncharacterized protein (125 aa).

Residues 96 to 113 (LFMMSIVSSYVCYITVLL) form a helical membrane-spanning segment.

The protein resides in the membrane. This is an uncharacterized protein from Saccharomyces cerevisiae (strain ATCC 204508 / S288c) (Baker's yeast).